Here is a 64-residue protein sequence, read N- to C-terminus: Large ribosomal subunit protein bL32 (64 aa).

This sequence belongs to the bacterial ribosomal protein bL32 family.

In Flavobacterium psychrophilum (strain ATCC 49511 / DSM 21280 / CIP 103535 / JIP02/86), this protein is Large ribosomal subunit protein bL32.